Consider the following 190-residue polypeptide: Interferon alpha-7 (190 aa).

The signal sequence occupies residues 1–23; the sequence is MARLCAFLMVLAVMSYWPTCCLG. 2 disulfides stabilise this stretch: Cys-24-Cys-122 and Cys-52-Cys-162. A glycan (N-linked (GlcNAc...) asparagine) is linked at Asn-101.

This sequence belongs to the alpha/beta interferon family.

The protein resides in the secreted. In terms of biological role, produced by macrophages, IFN-alpha have antiviral activities. Interferon stimulates the production of two enzymes: a protein kinase and an oligoadenylate synthetase. In Mus musculus (Mouse), this protein is Interferon alpha-7 (Ifna7).